A 347-amino-acid chain; its full sequence is Protein RecA (347 aa).

Residue 67-74 (GPESSGKT) participates in ATP binding.

This sequence belongs to the RecA family.

It is found in the cytoplasm. Functionally, can catalyze the hydrolysis of ATP in the presence of single-stranded DNA, the ATP-dependent uptake of single-stranded DNA by duplex DNA, and the ATP-dependent hybridization of homologous single-stranded DNAs. It interacts with LexA causing its activation and leading to its autocatalytic cleavage. The sequence is that of Protein RecA from Helicobacter pylori (strain Shi470).